The sequence spans 260 residues: Indole-3-glycerol phosphate synthase (260 aa).

Belongs to the TrpC family.

The enzyme catalyses 1-(2-carboxyphenylamino)-1-deoxy-D-ribulose 5-phosphate + H(+) = (1S,2R)-1-C-(indol-3-yl)glycerol 3-phosphate + CO2 + H2O. The protein operates within amino-acid biosynthesis; L-tryptophan biosynthesis; L-tryptophan from chorismate: step 4/5. This chain is Indole-3-glycerol phosphate synthase, found in Neisseria meningitidis serogroup B (strain ATCC BAA-335 / MC58).